We begin with the raw amino-acid sequence, 442 residues long: 26S proteasome non-ATPase regulatory subunit 12 homolog B (442 aa).

Residues 1-129 (MEESRQLESS…KEEQGLIAEA (129 aa)) adopt a coiled-coil conformation. The 172-residue stretch at 232–403 (EICRSYKAIY…GIICFQIVKD (172 aa)) folds into the PCI domain.

Belongs to the proteasome subunit p55 family. In terms of assembly, component of the 19S regulatory particle (RP/PA700) lid subcomplex of the 26S proteasome. The 26S proteasome is composed of a core protease (CP), known as the 20S proteasome, capped at one or both ends by the 19S regulatory particle (RP/PA700). The RP/PA700 complex is composed of at least 17 different subunits in two subcomplexes, the base and the lid, which form the portions proximal and distal to the 20S proteolytic core, respectively. Ubiquitous with highest expression in flowers.

The protein localises to the cytoplasm. The protein resides in the nucleus. In terms of biological role, acts as a regulatory subunit of the 26 proteasome which is involved in the ATP-dependent degradation of ubiquitinated proteins. Acts redundantly with RPN5A. The chain is 26S proteasome non-ATPase regulatory subunit 12 homolog B (RPN5B) from Arabidopsis thaliana (Mouse-ear cress).